Consider the following 2118-residue polypeptide: Separin (2118 aa).

Phosphoserine is present on S1121. Basic residues predominate over residues 1309–1318; that stretch reads KCSGRGRRRI. Residues 1309–1352 are disordered; sequence KCSGRGRRRIASVPPPLHNSSQKGLEEEGPPCTPKPPGRARQAG. Residues S1391 and S1394 each carry the phosphoserine modification. A disordered region spans residues 1408–1428; it reads EEPKRRGTASRTRGQTRKGRS. Residue S1504 is modified to Phosphoserine. Residues 1941–2036 form the Peptidase C50 domain; that stretch reads PQNTFYVLNP…SAALAVHGNL (96 aa). C2025 is a catalytic residue.

As to quaternary structure, interacts with PTTG1. Interacts with RAD21. Autocleaves. This function, which is not essential for its protease activity, is unknown. In terms of processing, phosphorylated by CDK1. There is 8 Ser/Thr phosphorylation sites. Among them, only Ser-1121 phosphorylation is the major site, which conducts to the enzyme inactivation.

Its subcellular location is the cytoplasm. The protein localises to the nucleus. It catalyses the reaction All bonds known to be hydrolyzed by this endopeptidase have arginine in P1 and an acidic residue in P4. P6 is often occupied by an acidic residue or by a hydroxy-amino-acid residue, the phosphorylation of which enhances cleavage.. Regulated by at least two independent mechanisms. First, it is inactivated via its interaction with securin/PTTG1, which probably covers its active site. The association with PTTG1 is not only inhibitory, since PTTG1 is also required for activating it, the enzyme being inactive in cells in which PTTG1 is absent. PTTG1 degradation at anaphase, liberates it and triggers RAD21 cleavage. Second, phosphorylation at Ser-1121 inactivates it. The complete phosphorylation during mitosis, is removed when cells undergo anaphase. Activation of the enzyme at the metaphase-anaphase transition probably requires the removal of both securin and inhibitory phosphate. Its function is as follows. Caspase-like protease, which plays a central role in the chromosome segregation by cleaving the SCC1/RAD21 subunit of the cohesin complex at the onset of anaphase. During most of the cell cycle, it is inactivated by different mechanisms. This chain is Separin (Espl1), found in Mus musculus (Mouse).